We begin with the raw amino-acid sequence, 349 residues long: Isopentenyl-diphosphate delta-isomerase (349 aa).

Position 6–7 (6–7) interacts with substrate; sequence RK. Residues 62–64, Ser93, and Asn122 each bind FMN; that span reads AMT. Substrate is bound at residue Gln152. Mg(2+) is bound at residue Glu153. FMN-binding positions include Lys184, Thr214, 258–259, and 280–281; these read GG and AG.

The protein belongs to the IPP isomerase type 2 family. In terms of assembly, homooctamer. Dimer of tetramers. It depends on FMN as a cofactor. Requires NADPH as cofactor. Mg(2+) is required as a cofactor.

The protein localises to the cytoplasm. It carries out the reaction isopentenyl diphosphate = dimethylallyl diphosphate. Functionally, involved in the biosynthesis of isoprenoids. Catalyzes the 1,3-allylic rearrangement of the homoallylic substrate isopentenyl (IPP) to its allylic isomer, dimethylallyl diphosphate (DMAPP). The polypeptide is Isopentenyl-diphosphate delta-isomerase (Bacillus licheniformis (strain ATCC 14580 / DSM 13 / JCM 2505 / CCUG 7422 / NBRC 12200 / NCIMB 9375 / NCTC 10341 / NRRL NRS-1264 / Gibson 46)).